Reading from the N-terminus, the 241-residue chain is Ribonuclease PH (241 aa).

Phosphate is bound by residues Arg-87 and 125 to 127; that span reads GTR.

The protein belongs to the RNase PH family. In terms of assembly, homohexameric ring arranged as a trimer of dimers.

It catalyses the reaction tRNA(n+1) + phosphate = tRNA(n) + a ribonucleoside 5'-diphosphate. Phosphorolytic 3'-5' exoribonuclease that plays an important role in tRNA 3'-end maturation. Removes nucleotide residues following the 3'-CCA terminus of tRNAs; can also add nucleotides to the ends of RNA molecules by using nucleoside diphosphates as substrates, but this may not be physiologically important. Probably plays a role in initiation of 16S rRNA degradation (leading to ribosome degradation) during starvation. The sequence is that of Ribonuclease PH from Nitrosomonas europaea (strain ATCC 19718 / CIP 103999 / KCTC 2705 / NBRC 14298).